The following is a 623-amino-acid chain: DNA-directed RNA polymerase subunit beta' (623 aa).

C70, C72, C85, and C88 together coordinate Zn(2+). The Mg(2+) site is built by D466, D468, and D470.

The protein belongs to the RNA polymerase beta' chain family. RpoC1 subfamily. As to quaternary structure, in plastids the minimal PEP RNA polymerase catalytic core is composed of four subunits: alpha, beta, beta', and beta''. When a (nuclear-encoded) sigma factor is associated with the core the holoenzyme is formed, which can initiate transcription. Requires Mg(2+) as cofactor. Zn(2+) serves as cofactor.

The protein localises to the plastid. It localises to the chloroplast. The enzyme catalyses RNA(n) + a ribonucleoside 5'-triphosphate = RNA(n+1) + diphosphate. Functionally, DNA-dependent RNA polymerase catalyzes the transcription of DNA into RNA using the four ribonucleoside triphosphates as substrates. This is DNA-directed RNA polymerase subunit beta' from Rhodomonas salina (Cryptomonas salina).